The primary structure comprises 386 residues: Putative acid--amine ligase YgiC (386 aa).

100–102 contacts ATP; sequence RLD. Mg(2+) is bound by residues Asp102, Glu115, and Asn117. ATP-binding positions include Lys267, Lys302, Gly309, Gln336, and 371–373; that span reads LIT.

This sequence belongs to the glutathionylspermidine synthase preATP-grasp family.

Its function is as follows. May be a ligase forming an amide bond. Shows ATPase activity. The polypeptide is Putative acid--amine ligase YgiC (ygiC) (Escherichia coli O157:H7).